A 142-amino-acid polypeptide reads, in one-letter code: Neuritin (142 aa).

Positions 1-27 (MGLTLSGRYISLFLAVQIAYLLQAVRA) are cleaved as a signal peptide. Ala-112 carries the GPI-anchor amidated alanine lipid modification. Residues 113-142 (GGNGAIRSSVPFGVTLLITALSALVTWMQF) constitute a propeptide, removed in mature form.

This sequence belongs to the neuritin family.

It is found in the cell membrane. Its subcellular location is the synapse. In terms of biological role, modulates postsynaptic dendritic arbor elaboration and synaptic maturation. The protein is Neuritin (nrn1) of Danio rerio (Zebrafish).